Reading from the N-terminus, the 161-residue chain is Dihydrofolate reductase type 1 from Tn4003 (161 aa).

Residues 2–157 form the DHFR domain; that stretch reads TLSIIVAHDK…IPHTFLHLVR (156 aa). Residue 6-8 participates in substrate binding; it reads IVA. Residues 7 to 8 and 15 to 20 contribute to the NADP(+) site; these read VA and IGYQNQ. A substrate-binding site is contributed by aspartate 28. 44–47 lines the NADP(+) pocket; that stretch reads ARKT. Arginine 58 serves as a coordination point for substrate. NADP(+) contacts are provided by residues 63–66 and 93–98; these read LTNQ and FGGQTL. Threonine 112 contributes to the substrate binding site.

It belongs to the dihydrofolate reductase family.

It carries out the reaction (6S)-5,6,7,8-tetrahydrofolate + NADP(+) = 7,8-dihydrofolate + NADPH + H(+). It functions in the pathway cofactor biosynthesis; tetrahydrofolate biosynthesis; 5,6,7,8-tetrahydrofolate from 7,8-dihydrofolate: step 1/1. Its function is as follows. Key enzyme in folate metabolism. Catalyzes an essential reaction for de novo glycine and purine synthesis, and for DNA precursor synthesis. The protein is Dihydrofolate reductase type 1 from Tn4003 (dfrA) of Staphylococcus aureus.